The primary structure comprises 203 residues: Pyrrolidone-carboxylate peptidase (203 aa).

Residues Glu78, Cys141, and His165 contribute to the active site.

It belongs to the peptidase C15 family. Homotetramer.

The protein resides in the cytoplasm. The enzyme catalyses Release of an N-terminal pyroglutamyl group from a polypeptide, the second amino acid generally not being Pro.. Functionally, removes 5-oxoproline from various penultimate amino acid residues except L-proline. In Thermoanaerobacter pseudethanolicus (strain ATCC 33223 / 39E) (Clostridium thermohydrosulfuricum), this protein is Pyrrolidone-carboxylate peptidase.